Here is a 687-residue protein sequence, read N- to C-terminus: SLCO1B3-SLCO1B7 readthrough transcript protein (687 aa).

The Cytoplasmic segment spans residues 1-29 (MDQHQHLNKTAESASSEKKKTRRCNGFKM). A helical transmembrane segment spans residues 30-50 (FLAALSFSYIAKALGGIIMKI). The Extracellular portion of the chain corresponds to 51-63 (SITQIERRFDISS). A helical membrane pass occupies residues 64-84 (SLAGLIDGSFEIGNLLVIVFV). Topologically, residues 85–96 (SYFGSKLHRPKL) are cytoplasmic. A helical membrane pass occupies residues 97 to 117 (IGIGCLLMGTGSILTSLPHFF). Residues 118-170 (MGYYRYSKETNIDPSENSTSNLPNCLINQMLSLNRTPSEIIERGCVKESGSHM) lie on the Extracellular side of the membrane. 2 N-linked (GlcNAc...) asparagine glycosylation sites follow: Asn-134 and Asn-151. The helical transmembrane segment at 171–191 (WIYVFMGNMLRGIGETPIVPL) threads the bilayer. Residues 192 to 206 (GISYIDDFAKEGHSS) are Cytoplasmic-facing. A helical membrane pass occupies residues 207 to 227 (LYLGTVNVMGMTGLVFAFMLG). Topologically, residues 228–258 (SLFAKMYVDIGYVDLSTIRITPKDSRWVGAW) are extracellular. Residues 259 to 279 (WLGFLVSGIVSIISSIPFFFL) traverse the membrane as a helical segment. The Cytoplasmic segment spans residues 280-339 (PLNPNKPQKERKVSLFLHVLKTNDKRNQIANLTNRRKYITKNVTGFFQSLKSILTNPLYV). A helical transmembrane segment spans residues 340–360 (IFVIFTLLHMSSYIASLTYII). The Extracellular portion of the chain corresponds to 361 to 376 (KMVEQQYGWSASKTNF). Residues 377–397 (LLGVLALPAVAIGMFSGGYII) form a helical membrane-spanning segment. Residues 398–409 (KKFKLSLVGLAK) lie on the Cytoplasmic side of the membrane. The helical transmembrane segment at 410–430 (LAFCSATVHLLSQVLYFFLIC) threads the bilayer. Over 431–539 (ESKSVAGLTL…CTRKSYVYFV (109 aa)) the chain is Extracellular. The Kazal-like domain occupies 453 to 508 (DVPLSYCNSECNCDESQWEPVCGNNGITYLSPCLAGCKSSSGNKEPIVFYNCSCVE). Intrachain disulfides connect Cys-459–Cys-489, Cys-465–Cys-485, and Cys-474–Cys-506. N-linked (GlcNAc...) asparagine glycans are attached at residues Asn-503 and Asn-516. The chain crosses the membrane as a helical span at residues 540–560 (IQVLDAFLCAVGLTSYSVLVI). The Cytoplasmic segment spans residues 561–568 (RIVQPELK). Residues 569–589 (ALAIGFHSMIMRSLGGILVPI) form a helical membrane-spanning segment. Over 590–624 (YFGALIDTTCMKWSTNSCGARGACRIYNSTYLGRA) the chain is Extracellular. Asn-617 is a glycosylation site (N-linked (GlcNAc...) asparagine). A helical membrane pass occupies residues 625–645 (FFGLKVALIFPVLVLLTVFIF). Topologically, residues 646–687 (VVRKKSHGKDTKVLENERQVMDEANLEFLNDSEHFVPSAEEQ) are cytoplasmic.

This sequence belongs to the organo anion transporter (TC 2.A.60) family. Expressed in the perivenular areas (centrilobular) of the liver (at protein level).

It localises to the smooth endoplasmic reticulum membrane. The protein resides in the cell membrane. It is found in the endoplasmic reticulum membrane. It catalyses the reaction 17beta-estradiol 17-O-(beta-D-glucuronate)(out) = 17beta-estradiol 17-O-(beta-D-glucuronate)(in). The enzyme catalyses dehydroepiandrosterone 3-sulfate(out) = dehydroepiandrosterone 3-sulfate(in). It carries out the reaction taurocholate(out) = taurocholate(in). The catalysed reaction is lithocholate(out) = lithocholate(in). With respect to regulation, transport activity is induced by farnesoid X receptor (FXR) agonists such as chenodeoxycholate. Its function is as follows. Mediates the Na(+)-independent uptake of organic anions. Transports the conjugated steroids 17-beta-glucuronosyl estradiol (17beta-estradiol 17-O-(beta-D-glucuronate) or E2G) and dehydroepiandrosterone 3-sulfate (DHEAS) at the smooth endoplasmic reticulum membrane (SER), granting access to metabolizing enzymes. Contributes to the metabolism of bile acids such as taurocholate (cholyltaurine) and lithocholate, by functioning as a doorway between SER and cytosol, thereby decreasing their circulating levels and protecting the organism from their detergent properties. Regulates access or exit of drugs to the SER lumen. The protein is SLCO1B3-SLCO1B7 readthrough transcript protein of Homo sapiens (Human).